A 206-amino-acid polypeptide reads, in one-letter code: Isochorismatase family protein 1B (206 aa).

This sequence belongs to the isochorismatase family.

This Dictyostelium discoideum (Social amoeba) protein is Isochorismatase family protein 1B.